We begin with the raw amino-acid sequence, 142 residues long: Prefoldin subunit alpha 1 (142 aa).

This sequence belongs to the prefoldin subunit alpha family. In terms of assembly, heterohexamer of two alpha and four beta subunits.

It localises to the cytoplasm. Functionally, molecular chaperone capable of stabilizing a range of proteins. Seems to fulfill an ATP-independent, HSP70-like function in archaeal de novo protein folding. The chain is Prefoldin subunit alpha 1 (pfdA1) from Methanocaldococcus jannaschii (strain ATCC 43067 / DSM 2661 / JAL-1 / JCM 10045 / NBRC 100440) (Methanococcus jannaschii).